Reading from the N-terminus, the 375-residue chain is Peptide chain release factor 1 (375 aa).

Gln-237 carries the N5-methylglutamine modification. The span at Ala-289–Arg-299 shows a compositional bias: basic and acidic residues. Residues Ala-289 to Arg-326 form a disordered region.

Belongs to the prokaryotic/mitochondrial release factor family. Methylated by PrmC. Methylation increases the termination efficiency of RF1.

The protein localises to the cytoplasm. In terms of biological role, peptide chain release factor 1 directs the termination of translation in response to the peptide chain termination codons UAG and UAA. The protein is Peptide chain release factor 1 (prfA) of Deinococcus radiodurans (strain ATCC 13939 / DSM 20539 / JCM 16871 / CCUG 27074 / LMG 4051 / NBRC 15346 / NCIMB 9279 / VKM B-1422 / R1).